The following is a 434-amino-acid chain: Transcription elongation factor B polypeptide 3 (434 aa).

The segment at 142-161 (KPEPVDVHEQQASSSSMSYQ) is disordered. Polar residues predominate over residues 151–160 (QQASSSSMSY). Residues 221–230 (TLVSLCQTVL) form a BC box region. One can recognise an F-box domain in the interval 237–281 (IDHVGIVPFDLLKPVLDHASTDQLRHILDVNPMLVEDADEMFHEM). A disordered region spans residues 391–415 (ITPRGGGVPSTSRSRSNNNNNMNNG).

Heterotrimer of an A, B and C subunit.

The protein resides in the nucleus. In terms of biological role, SIII, also known as elongin, is a general transcription elongation factor that increases the RNA polymerase II transcription elongation past template-encoded arresting sites. Subunit A is transcriptionally active and its transcription activity is strongly enhanced by binding to the dimeric complex of the SIII regulatory subunits B and C (elongin BC complex). The chain is Transcription elongation factor B polypeptide 3 from Caenorhabditis elegans.